The following is a 121-amino-acid chain: Large ribosomal subunit protein bL19 (121 aa).

It belongs to the bacterial ribosomal protein bL19 family.

Its function is as follows. This protein is located at the 30S-50S ribosomal subunit interface and may play a role in the structure and function of the aminoacyl-tRNA binding site. In Chlorobaculum tepidum (strain ATCC 49652 / DSM 12025 / NBRC 103806 / TLS) (Chlorobium tepidum), this protein is Large ribosomal subunit protein bL19.